Here is a 122-residue protein sequence, read N- to C-terminus: Large ribosomal subunit protein uL14c (122 aa).

The protein belongs to the universal ribosomal protein uL14 family. As to quaternary structure, part of the 50S ribosomal subunit.

It localises to the plastid. Its subcellular location is the chloroplast. Its function is as follows. Binds to 23S rRNA. This chain is Large ribosomal subunit protein uL14c, found in Cryptomeria japonica (Japanese cedar).